The chain runs to 163 residues: Neurotrophin-3 (163 aa).

Residues 1 to 3 (IQS) form the signal peptide. The propeptide occupies 4–119 (TSMDQGILTE…VLNRTSRRKR (116 aa)). The N-linked (GlcNAc...) asparagine glycan is linked to Asn-112.

It belongs to the NGF-beta family.

The protein resides in the secreted. Seems to promote the survival of visceral and proprioceptive sensory neurons. This Epicrates cenchria (Rainbow boa) protein is Neurotrophin-3 (NTF3).